The primary structure comprises 352 residues: UDP-N-acetylglucosamine--N-acetylmuramyl-(pentapeptide) pyrophosphoryl-undecaprenol N-acetylglucosamine transferase (352 aa).

Residues threonine 11–glycine 13, asparagine 120, arginine 161, serine 188, and glutamine 286 each bind UDP-N-acetyl-alpha-D-glucosamine.

Belongs to the glycosyltransferase 28 family. MurG subfamily.

It is found in the cell inner membrane. The catalysed reaction is di-trans,octa-cis-undecaprenyl diphospho-N-acetyl-alpha-D-muramoyl-L-alanyl-D-glutamyl-meso-2,6-diaminopimeloyl-D-alanyl-D-alanine + UDP-N-acetyl-alpha-D-glucosamine = di-trans,octa-cis-undecaprenyl diphospho-[N-acetyl-alpha-D-glucosaminyl-(1-&gt;4)]-N-acetyl-alpha-D-muramoyl-L-alanyl-D-glutamyl-meso-2,6-diaminopimeloyl-D-alanyl-D-alanine + UDP + H(+). It participates in cell wall biogenesis; peptidoglycan biosynthesis. In terms of biological role, cell wall formation. Catalyzes the transfer of a GlcNAc subunit on undecaprenyl-pyrophosphoryl-MurNAc-pentapeptide (lipid intermediate I) to form undecaprenyl-pyrophosphoryl-MurNAc-(pentapeptide)GlcNAc (lipid intermediate II). The chain is UDP-N-acetylglucosamine--N-acetylmuramyl-(pentapeptide) pyrophosphoryl-undecaprenol N-acetylglucosamine transferase from Prochlorococcus marinus (strain NATL1A).